Here is a 301-residue protein sequence, read N- to C-terminus: Olfactory receptor 10AG1 (301 aa).

Residues 1–16 lie on the Extracellular side of the membrane; sequence MEFVLLGFSDIPNLHW. The helical transmembrane segment at 17–37 threads the bilayer; sequence MLFSIFLLMYLMILMCNGIII. The Cytoplasmic segment spans residues 38–45; that stretch reads LLIKIHPA. A helical transmembrane segment spans residues 46–66; that stretch reads LQTPMYFFLSNFSLLEICYVT. Residues 67 to 90 lie on the Extracellular side of the membrane; the sequence is IIIPRMLMDIWTQKGNISLFACAT. Asn82 is a glycosylation site (N-linked (GlcNAc...) asparagine). A disulfide bond links Cys88 and Cys180. Residues 91–111 traverse the membrane as a helical segment; the sequence is QMCFFLMLGGTECLLLTVMAY. Topologically, residues 112–130 are cytoplasmic; the sequence is DRYVAICKPLQYPLVMNHK. Residues 131 to 151 traverse the membrane as a helical segment; sequence VCIQLIIASWTITIPVVIGET. Over 152–188 the chain is Extracellular; it reads CQIFLLPFCGTNTINHFFCDIPPILKLACGNIFVNEI. Residues 189-208 traverse the membrane as a helical segment; it reads TVHVVAVVFITVPFLLIVVS. The Cytoplasmic segment spans residues 209-228; sequence YGKIISNILKLSSARGKAKA. A helical transmembrane segment spans residues 229-249; sequence FSTCSSHLIVVILFFGAGTIT. Residues 250 to 262 lie on the Extracellular side of the membrane; it reads YLQPKPHQFQRMG. A helical membrane pass occupies residues 263-283; that stretch reads KLISLFYTILIPTLNPIIYTL. The Cytoplasmic segment spans residues 284–301; it reads RNKDIMVALRKLLAKLLT.

The protein belongs to the G-protein coupled receptor 1 family.

It localises to the cell membrane. Its function is as follows. Odorant receptor. The protein is Olfactory receptor 10AG1 (OR10AG1) of Homo sapiens (Human).